The following is a 1729-amino-acid chain: Zinc finger CCCH domain-containing protein 13 (1729 aa).

Disordered stretches follow at residues 1–40 (MSKI…TTET) and 57–156 (CRFI…NGDI). Residues 10–23 (VENTKTISESTSRR) are compositionally biased toward polar residues. The segment at 36-64 (STTETQCRNWLKTGSCLYGNTCRFIHGPS) adopts a C3H1-type zinc-finger fold. A phosphoserine mark is found at Ser-64 and Ser-77. The segment covering 76–136 (RSPERPTGDL…IKIVKERTPE (61 aa)) has biased composition (basic and acidic residues). Residues 162–196 (HELSLEMKRQKIQRELMKLEQENMDKREEIIIQKE) adopt a coiled-coil conformation. A Glycyl lysine isopeptide (Lys-Gly) (interchain with G-Cter in SUMO2) cross-link involves residue Lys-179. Basic and acidic residues predominate over residues 182-193 (QENMDKREEIII). Disordered regions lie at residues 182 to 528 (QENM…IRDV) and 581 to 1527 (DVYQ…PISD). Residues Ser-198, Ser-207, Ser-209, and Ser-211 each carry the phosphoserine modification. A compositionally biased stretch (low complexity) spans 204 to 213 (SKLSPSPSLR). Positions 214 to 224 (KSSKSPKRKSS) are enriched in basic residues. Ser-242 is modified (phosphoserine). The span at 245–254 (LDQQRNSKGN) shows a compositional bias: polar residues. Thr-263 carries the phosphothreonine modification. The residue at position 265 (Ser-265) is a Phosphoserine. The segment covering 283-315 (KYKVKDRIEEKPRDGKDRGRDFEKQREKRDKPR) has biased composition (basic and acidic residues). A phosphoserine mark is found at Ser-316, Ser-318, Ser-324, and Ser-327. Low complexity predominate over residues 321–345 (QHHSPLSSRHHSSSSQSGSSIQRHS). Phosphothreonine is present on residues Thr-353 and Thr-363. The segment covering 358-368 (YQRTLTPSLRR) has biased composition (polar residues). Phosphoserine occurs at positions 369, 371, and 380. Composition is skewed to basic and acidic residues over residues 393-528 (PMRE…IRDV) and 581-636 (DVYQ…EKGS). The segment covering 639–654 (TRGSQMDSHSSGSNYH) has biased composition (polar residues). The segment covering 655–701 (DSWETRSSYPERDRYPERDTRDPARDSSFERRHGERDRRDNRERDQR) has biased composition (basic and acidic residues). Position 704 is a phosphoserine (Ser-704). Positions 706–865 (IRHQGRSEEL…KERERQREWE (160 aa)) form a coiled coil. Over residues 710-897 (GRSEELERDE…IPRDSHEERK (188 aa)) the composition is skewed to basic and acidic residues. A phosphoserine mark is found at Ser-907, Ser-909, Ser-913, Ser-921, Ser-924, Ser-929, Ser-949, Ser-951, and Ser-953. Over residues 920–938 (HSPDSDTYHSGDDKNEKHR) the composition is skewed to basic and acidic residues. Over residues 957–1035 (LTEDRQGRWK…GSDRAHDEKK (79 aa)) the composition is skewed to basic and acidic residues. Thr-958 is modified (phosphothreonine). Residues 1036–1046 (KAKAPKKPVKK) show a composition bias toward basic residues. Positions 1047–1065 (KKEEDVGVERGNLETHEDS) are enriched in basic and acidic residues. Phosphoserine occurs at positions 1069, 1086, 1090, and 1093. The span at 1072–1086 (KGQKKKNIEKKRKRS) shows a compositional bias: basic residues. Residue Thr-1109 is modified to Phosphothreonine. 2 stretches are compositionally biased toward basic and acidic residues: residues 1114 to 1137 (IKEE…KKEN) and 1149 to 1159 (PDRTEGLEAEH). Composition is skewed to low complexity over residues 1160-1176 (TAAT…LSSL) and 1184-1218 (AAAS…TNGS). Residues 1228–1253 (ARGEKVEVSHVTLEDTPHRKLVDQKR) are compositionally biased toward basic and acidic residues. Ser-1256, Ser-1259, Ser-1273, and Ser-1275 each carry phosphoserine. Over residues 1278 to 1288 (SAHRSGDDQGS) the composition is skewed to basic and acidic residues. The residue at position 1295 (Ser-1295) is a Phosphoserine. 2 stretches are compositionally biased toward basic and acidic residues: residues 1296–1351 (GSRD…DRQV) and 1359–1440 (DSRD…ERTF). A phosphoserine mark is found at Ser-1427, Ser-1443, Ser-1447, Ser-1467, Ser-1470, Ser-1499, and Ser-1526. 2 stretches are compositionally biased toward basic and acidic residues: residues 1447-1482 (SGKR…DRDL) and 1490-1499 (DVSKAERTES).

The protein belongs to the ZC3H13 family. In terms of assembly, component of the WMM complex, a N6-methyltransferase complex composed of a catalytic subcomplex, named MAC, and of an associated subcomplex, named MACOM. The MAC subcomplex is composed of METTL3 and METTL14. The MACOM subcomplex is composed of WTAP, ZC3H13, CBLL1/HAKAI, VIRMA, and, in some cases of RBM15 (RBM15 or RBM15B). Also a component of a MACOM-like complex, named WTAP complex, composed of WTAP, ZC3H13, CBLL1/HAKAI, VIRMA, RBM15, BCLAF1 and THRAP3.

The protein resides in the nucleus speckle. Its subcellular location is the nucleus. It is found in the nucleoplasm. Its function is as follows. Associated component of the WMM complex, a complex that mediates N6-methyladenosine (m6A) methylation of RNAs, a modification that plays a role in the efficiency of mRNA splicing and RNA processing. Acts as a key regulator of m6A methylation by promoting m6A methylation of mRNAs at the 3'-UTR. Controls embryonic stem cells (ESCs) pluripotency via its role in m6A methylation. In the WMM complex, anchors component of the MACOM subcomplex in the nucleus. Also required for bridging WTAP to the RNA-binding component RBM15 (RBM15 or RBM15B). The sequence is that of Zinc finger CCCH domain-containing protein 13 from Mus musculus (Mouse).